A 260-amino-acid chain; its full sequence is 2-amino-5-formylamino-6-ribosylaminopyrimidin-4(3H)-one 5'-monophosphate deformylase (260 aa).

Positions 33, 35, 44, and 112 each coordinate Fe cation.

This sequence belongs to the creatininase superfamily. FAPy deformylase family. Homodimer. The cofactor is Fe(2+). Zn(2+) serves as cofactor.

It carries out the reaction 2-amino-5-formylamino-6-(5-phospho-D-ribosylamino)pyrimidin-4(3H)-one + H2O = 2,5-diamino-6-(1-D-ribosylamino)pyrimidin-4(3H)-one 5'-phosphate + formate + H(+). It participates in cofactor biosynthesis; coenzyme F420 biosynthesis. It functions in the pathway cofactor biosynthesis; riboflavin biosynthesis. Its function is as follows. Catalyzes the hydrolysis of the formamide of 2-amino-5-formylamino-6-ribosylamino-4(3H)-pyrimidinone 5'-monophosphate (FAPy) to form 2,5-diamino-6-ribosylamino-4(3H)-pyrimidinone 5'-phosphate (APy). This Methanococcus voltae (strain ATCC BAA-1334 / A3) protein is 2-amino-5-formylamino-6-ribosylaminopyrimidin-4(3H)-one 5'-monophosphate deformylase.